The primary structure comprises 66 residues: Large ribosomal subunit protein uL29 (66 aa).

Belongs to the universal ribosomal protein uL29 family.

This chain is Large ribosomal subunit protein uL29, found in Rhizobium etli (strain CIAT 652).